The following is a 219-amino-acid chain: Orotate phosphoribosyltransferase (219 aa).

Residue K26 participates in 5-phospho-alpha-D-ribose 1-diphosphate binding. 34-35 is an orotate binding site; it reads FF. 5-phospho-alpha-D-ribose 1-diphosphate-binding positions include 72–73, R98, K99, K102, H104, and 124–132; these read YK and DDVITAGTA. Positions 128 and 156 each coordinate orotate.

It belongs to the purine/pyrimidine phosphoribosyltransferase family. PyrE subfamily. As to quaternary structure, homodimer. Mg(2+) serves as cofactor.

The catalysed reaction is orotidine 5'-phosphate + diphosphate = orotate + 5-phospho-alpha-D-ribose 1-diphosphate. The protein operates within pyrimidine metabolism; UMP biosynthesis via de novo pathway; UMP from orotate: step 1/2. Functionally, catalyzes the transfer of a ribosyl phosphate group from 5-phosphoribose 1-diphosphate to orotate, leading to the formation of orotidine monophosphate (OMP). The chain is Orotate phosphoribosyltransferase from Xanthomonas campestris pv. campestris (strain 8004).